The chain runs to 1392 residues: DNA-directed RNA polymerase subunit beta'' (1392 aa).

Positions 224, 295, 302, and 305 each coordinate Zn(2+).

It belongs to the RNA polymerase beta' chain family. RpoC2 subfamily. As to quaternary structure, in plastids the minimal PEP RNA polymerase catalytic core is composed of four subunits: alpha, beta, beta', and beta''. When a (nuclear-encoded) sigma factor is associated with the core the holoenzyme is formed, which can initiate transcription. Requires Zn(2+) as cofactor.

Its subcellular location is the plastid. The protein localises to the chloroplast. The catalysed reaction is RNA(n) + a ribonucleoside 5'-triphosphate = RNA(n+1) + diphosphate. In terms of biological role, DNA-dependent RNA polymerase catalyzes the transcription of DNA into RNA using the four ribonucleoside triphosphates as substrates. In Solanum tuberosum (Potato), this protein is DNA-directed RNA polymerase subunit beta''.